Reading from the N-terminus, the 522-residue chain is Serine/threonine-protein kinase pak-2 (522 aa).

The CRIB domain maps to 16–29 (ISTPSNFEHRIHAG). Residues 183 to 204 (TTTPQLQPKSPSTPQAMRQQPK) are compositionally biased toward polar residues. The disordered stretch occupies residues 183–208 (TTTPQLQPKSPSTPQAMRQQPKCTEG). Positions 231-482 (LTDYKQIGEG…AKDLLRHPFF (252 aa)) constitute a Protein kinase domain. ATP contacts are provided by residues 237 to 245 (IGEGSTGVV) and K260. Catalysis depends on D350, which acts as the Proton acceptor.

Belongs to the protein kinase superfamily. STE Ser/Thr protein kinase family. STE20 subfamily. Requires Mg(2+) as cofactor. Mn(2+) serves as cofactor. Expressed in pharynx, vulva and spermatheca. Unlike other p21-activated kinases, expression is not detected in neurons.

It carries out the reaction L-seryl-[protein] + ATP = O-phospho-L-seryl-[protein] + ADP + H(+). The catalysed reaction is L-threonyl-[protein] + ATP = O-phospho-L-threonyl-[protein] + ADP + H(+). In terms of biological role, serine/threonine-protein kinase which plays a redundant role with pak-1 in embryogenesis but, in contrast to pak-1, is not involved in commissural axon guidance of ventral cord motoneurons or in distal tip cell (DTC) migration. The protein is Serine/threonine-protein kinase pak-2 of Caenorhabditis elegans.